Here is a 501-residue protein sequence, read N- to C-terminus: MPPAVGGPVGYTPPDGGWGWAVVIGAFISIGFSYAFPKSITVFFKEIEGIFNATTSEVSWISSIMLAVMYGGGPISSVLVNKYGSRPVMIVGGILSGSGLIAASFCNTVQELYFSVGVIGGLGLAFNLNPALTMIGKYFYKRRPLANGLAMAGSPVFLSTLAPLNQAFFMIYGWRGSFLILGGLLLNCCVAGALMRPIGPKPTTAEKEKSKGSLQEAGKYETKKGASDANTDLIGGNPKEEKKSIFQTLNTFLDLSLFKHRGFLLYLSGNVLMFFGLFTPLVFLSNYGKSKHYSSEKAAFLLSILAFVDMVARPSMGLVANTKWVRPRVQYFFAASIIANGLCHLAAPLSSTYIELCIYAGFFGFAFGWLSSVLFETLMDLVGPQRFSSAVGLVTIVECCPVLLGPPVLGRLNDIYGDYKYTYWACGIILIVAGIYLFIGMGINYRLLEKEQKAEKQQKKESKDEETNVDVAEKPKEVIDAAESPEHKATEEDPKEAESPV.

The Cytoplasmic segment spans residues 1 to 22 (MPPAVGGPVGYTPPDGGWGWAV). The chain crosses the membrane as a helical span at residues 23-44 (VIGAFISIGFSYAFPKSITVFF). Lysine 38 serves as a coordination point for (S)-lactate. At 45-55 (KEIEGIFNATT) the chain is on the extracellular side. Residues 56–80 (SEVSWISSIMLAVMYGGGPISSVLV) form a helical membrane-spanning segment. The Cytoplasmic portion of the chain corresponds to 81 to 84 (NKYG). The helical transmembrane segment at 85 to 105 (SRPVMIVGGILSGSGLIAASF) threads the bilayer. The Extracellular segment spans residues 106–109 (CNTV). Residues 110 to 132 (QELYFSVGVIGGLGLAFNLNPAL) form a helical membrane-spanning segment. The Cytoplasmic portion of the chain corresponds to 133 to 146 (TMIGKYFYKRRPLA). Residues 147–169 (NGLAMAGSPVFLSTLAPLNQAFF) traverse the membrane as a helical segment. At 170–174 (MIYGW) the chain is on the extracellular side. The chain crosses the membrane as a helical span at residues 175–194 (RGSFLILGGLLLNCCVAGAL). Residues 195–261 (MRPIGPKPTT…FLDLSLFKHR (67 aa)) are Cytoplasmic-facing. The segment at 201–236 (KPTTAEKEKSKGSLQEAGKYETKKGASDANTDLIGG) is disordered. Serine 210, serine 213, and serine 227 each carry phosphoserine. Threonine 231 is subject to Phosphothreonine. Residues 262–288 (GFLLYLSGNVLMFFGLFTPLVFLSNYG) traverse the membrane as a helical segment. Over 289–295 (KSKHYSS) the chain is Extracellular. Residues 296 to 317 (EKAAFLLSILAFVDMVARPSMG) form a helical membrane-spanning segment. A H(+)-binding site is contributed by aspartate 309. Arginine 313 contributes to the (S)-lactate binding site. Over 318 to 328 (LVANTKWVRPR) the chain is Cytoplasmic. A helical membrane pass occupies residues 329-349 (VQYFFAASIIANGLCHLAAPL). The Extracellular portion of the chain corresponds to 350–353 (SSTY). A helical membrane pass occupies residues 354–375 (IELCIYAGFFGFAFGWLSSVLF). Residues 376–389 (ETLMDLVGPQRFSS) lie on the Cytoplasmic side of the membrane. Residues 390-410 (AVGLVTIVECCPVLLGPPVLG) traverse the membrane as a helical segment. Residues 411–421 (RLNDIYGDYKY) are Extracellular-facing. A helical transmembrane segment spans residues 422–443 (TYWACGIILIVAGIYLFIGMGI). Residues 444–501 (NYRLLEKEQKAEKQQKKESKDEETNVDVAEKPKEVIDAAESPEHKATEEDPKEAESPV) lie on the Cytoplasmic side of the membrane. Residues 454-501 (AEKQQKKESKDEETNVDVAEKPKEVIDAAESPEHKATEEDPKEAESPV) form a disordered region. A Phosphoserine modification is found at serine 462. Position 467 is a phosphothreonine (threonine 467). Residues serine 484 and serine 499 each carry the phosphoserine modification.

It belongs to the major facilitator superfamily. Monocarboxylate porter (TC 2.A.1.13) family. Interacts with BSG; interaction mediates SLC16A1 targeting to the plasma membrane. Interacts with EMB; interaction mediates SLC16A1 targeting to the plasma membrane.

It localises to the cell membrane. The protein resides in the basolateral cell membrane. The protein localises to the apical cell membrane. The enzyme catalyses (S)-lactate(in) + H(+)(in) = (S)-lactate(out) + H(+)(out). The catalysed reaction is acetate(out) + H(+)(out) = acetate(in) + H(+)(in). It carries out the reaction acetoacetate(out) + H(+)(out) = acetoacetate(in) + H(+)(in). It catalyses the reaction pyruvate(out) + H(+)(out) = pyruvate(in) + H(+)(in). The enzyme catalyses (R)-3-hydroxybutanoate(out) + H(+)(out) = (R)-3-hydroxybutanoate(in) + H(+)(in). The catalysed reaction is 3-methyl-2-oxobutanoate(out) + H(+)(out) = 3-methyl-2-oxobutanoate(in) + H(+)(in). It carries out the reaction 4-methyl-2-oxopentanoate(out) + H(+)(out) = 4-methyl-2-oxopentanoate(in) + H(+)(in). It catalyses the reaction succinate(in) + 2 H(+)(in) = succinate(out) + 2 H(+)(out). Bidirectional proton-coupled monocarboxylate transporter. Catalyzes the rapid transport across the plasma membrane of many monocarboxylates such as lactate, pyruvate, acetate and the ketone bodies acetoacetate and beta-hydroxybutyrate, and thus contributes to the maintenance of intracellular pH. The transport direction is determined by the proton motive force and the concentration gradient of the substrate monocarboxylate. MCT1 is a major lactate exporter. Plays a role in cellular responses to a high-fat diet by modulating the cellular levels of lactate and pyruvate that contribute to the regulation of central metabolic pathways and insulin secretion, with concomitant effects on plasma insulin levels and blood glucose homeostasis. Facilitates the protonated monocarboxylate form of succinate export, that its transient protonation upon muscle cell acidification in exercising muscle and ischemic heart. Functions via alternate outward- and inward-open conformation states. Protonation and deprotonation of 309-Asp is essential for the conformational transition. In Bos taurus (Bovine), this protein is Monocarboxylate transporter 1 (SLC16A1).